Reading from the N-terminus, the 568-residue chain is Kelch-like protein 12 (568 aa).

One can recognise a BTB domain in the interval Cys33–Val100. The region spanning Cys135 to Ile236 is the BACK domain. Kelch repeat units follow at residues Val282–Asp329, Ile331–Asp379, Met380–Gly426, Val427–Asp473, His474–Gly520, and Leu522–Glu567.

Component of the BCR(KLHL12) E3 ubiquitin ligase complex, at least composed of CUL3 and KLHL12 and RBX1. This complex interacts with DVL3 upon activation of the Wnt signaling pathway by WNT3A. Interacts with DRD4, KLHL2 and SEC31A. Interacts with PEF1 and PDCD6/ALG-2; interaction takes place in response to cytosolic calcium increase and leads to bridge together the BCR(KLHL12) complex and SEC31 (SEC31A or SEC31B). Post-translationally, ubiquitinated by the SCF(FBXL17) complex, leading to its degradation by the proteasome: ubiquitination by the SCF(FBXL17) complex takes place when aberrant BTB domain dimers are formed.

The protein localises to the cytoplasmic vesicle. It is found in the COPII-coated vesicle. It functions in the pathway protein modification; protein ubiquitination. In terms of biological role, substrate-specific adapter of a BCR (BTB-CUL3-RBX1) E3 ubiquitin ligase complex that acts as a negative regulator of Wnt signaling pathway and ER-Golgi transport. The BCR(KLHL12) complex is involved in ER-Golgi transport by regulating the size of COPII coats, thereby playing a key role in collagen export, which is required for embryonic stem (ES) cells division: BCR(KLHL12) acts by mediating monoubiquitination of SEC31 (SEC31A or SEC31B). The BCR(KLHL12) complex is also involved in neural crest specification: in response to cytosolic calcium increase, interacts with the heterodimer formed with PEF1 and PDCD6/ALG-2, leading to bridge together the BCR(KLHL12) complex and SEC31 (SEC31A or SEC31B), promoting monoubiquitination of SEC31 and subsequent collagen export. As part of the BCR(KLHL12) complex, also acts as a negative regulator of the Wnt signaling pathway by mediating ubiquitination and subsequent proteolysis of DVL3. The BCR(KLHL12) complex also mediates polyubiquitination of DRD4 and PEF1, without leading to degradation of these proteins. The chain is Kelch-like protein 12 (KLHL12) from Bos taurus (Bovine).